The following is a 364-amino-acid chain: Pectinesterase (364 aa).

An N-terminal signal peptide occupies residues 1–22; sequence MSCIAVEAVLLGILLYIPIVLS. Asparagine 103 carries N-linked (GlcNAc...) asparagine glycosylation. The active site involves aspartate 220.

The protein localises to the secreted. The enzyme catalyses [(1-&gt;4)-alpha-D-galacturonosyl methyl ester](n) + n H2O = [(1-&gt;4)-alpha-D-galacturonosyl](n) + n methanol + n H(+). It participates in glycan metabolism; pectin degradation; 2-dehydro-3-deoxy-D-gluconate from pectin: step 1/5. Catalyzes the demethylesterification of homogalacturonan components of pectin. The chain is Pectinesterase from Parthenium hysterophorus (Santa Maria feverfew).